Consider the following 440-residue polypeptide: 3-phosphoshikimate 1-carboxyvinyltransferase (440 aa).

3-phosphoshikimate contacts are provided by K31, S32, and R36. Position 31 (K31) interacts with phosphoenolpyruvate. The phosphoenolpyruvate site is built by G104 and R133. S178, Q180, D328, and K355 together coordinate 3-phosphoshikimate. Phosphoenolpyruvate is bound at residue Q180. D328 functions as the Proton acceptor in the catalytic mechanism. Phosphoenolpyruvate contacts are provided by R359 and R401.

This sequence belongs to the EPSP synthase family. As to quaternary structure, monomer.

The protein localises to the cytoplasm. It catalyses the reaction 3-phosphoshikimate + phosphoenolpyruvate = 5-O-(1-carboxyvinyl)-3-phosphoshikimate + phosphate. The protein operates within metabolic intermediate biosynthesis; chorismate biosynthesis; chorismate from D-erythrose 4-phosphate and phosphoenolpyruvate: step 6/7. In terms of biological role, catalyzes the transfer of the enolpyruvyl moiety of phosphoenolpyruvate (PEP) to the 5-hydroxyl of shikimate-3-phosphate (S3P) to produce enolpyruvyl shikimate-3-phosphate and inorganic phosphate. In Thermosynechococcus vestitus (strain NIES-2133 / IAM M-273 / BP-1), this protein is 3-phosphoshikimate 1-carboxyvinyltransferase.